The primary structure comprises 5148 residues: E3 ubiquitin-protein ligase RNF213 (5148 aa).

Residues Asp-38 to Glu-48 show a composition bias toward polar residues. Positions Asp-38–Ala-341 are disordered. Residues Pro-69–Glu-78 show a composition bias toward basic and acidic residues. Over residues Gly-101–Leu-113 the composition is skewed to polar residues. Residues Pro-130–Pro-146 show a composition bias toward low complexity. Position 196 is a phosphoserine (Ser-196). Composition is skewed to basic and acidic residues over residues Ser-233–Pro-245, Ala-257–Lys-267, and Lys-279–Gly-289. The segment covering Ala-319–Ala-335 has biased composition (low complexity). Lys-1128 participates in a covalent cross-link: Glycyl lysine isopeptide (Lys-Gly) (interchain with G-Cter in SUMO2). ATP-binding positions include Gly-1957–Leu-1962, Glu-2060, Ala-2114, Asp-2116, and Arg-2177. Phosphoserine is present on Ser-2234. 2 residues coordinate ATP: Lys-2460 and Ser-2535. The stretch at Glu-3435–Asp-3465 forms a coiled coil. 10 residues coordinate Zn(2+): Cys-3947, Cys-3950, Cys-3962, His-3964, Cys-3967, Cys-3970, Cys-3982, Cys-3985, Cys-4451, and His-4455. Residues Cys-3947 to Leu-3986 form an RING-type zinc finger. The segment at Met-4429–Thr-4501 adopts an RZ-type zinc-finger fold. Cys-4462 acts as the Nucleophile; for E3 ubiquitin-lipopolysaccharide ligase activity in catalysis. Zn(2+) is bound by residues Cys-4471 and Cys-4474.

This sequence belongs to the AAA ATPase family. Monomer. Interacts with UBE2L3/UBCH7; UBE2L3/UBCH7 is the most efficient ubiquitin-conjugating enzyme E2 for the ubiquitin ligase activity. Interacts with UBE2N/UBC13; promoting 'Lys-63'-linked ubiquitination of target proteins.

It localises to the cytoplasm. The protein resides in the cytosol. It is found in the lipid droplet. The catalysed reaction is S-ubiquitinyl-[E2 ubiquitin-conjugating enzyme]-L-cysteine + [acceptor protein]-L-lysine = [E2 ubiquitin-conjugating enzyme]-L-cysteine + N(6)-ubiquitinyl-[acceptor protein]-L-lysine.. It carries out the reaction ATP + H2O = ADP + phosphate + H(+). Its pathway is protein modification; protein ubiquitination. In terms of biological role, atypical E3 ubiquitin ligase that can catalyze ubiquitination of both proteins and lipids, and which is involved in various processes, such as lipid metabolism, angiogenesis and cell-autonomous immunity. Acts as a key immune sensor by catalyzing ubiquitination of the lipid A moiety of bacterial lipopolysaccharide (LPS) via its RZ-type zinc-finger: restricts the proliferation of cytosolic bacteria, such as Salmonella, by generating the bacterial ubiquitin coat through the ubiquitination of LPS. Also acts indirectly by mediating the recruitment of the LUBAC complex, which conjugates linear polyubiquitin chains. Ubiquitination of LPS triggers cell-autonomous immunity, such as antibacterial autophagy, leading to degradation of the microbial invader. Involved in lipid metabolism by regulating fat storage and lipid droplet formation; act by inhibiting the lipolytic process. Also regulates lipotoxicity by inhibiting desaturation of fatty acids. Also acts as an E3 ubiquitin-protein ligase via its RING-type zinc finger: mediates 'Lys-63'-linked ubiquitination of target proteins. Involved in the non-canonical Wnt signaling pathway in vascular development: acts by mediating ubiquitination and degradation of FLNA and NFATC2 downstream of RSPO3, leading to inhibit the non-canonical Wnt signaling pathway and promoting vessel regression. Also has ATPase activity; ATPase activity is required for ubiquitination of LPS. The chain is E3 ubiquitin-protein ligase RNF213 from Mus musculus (Mouse).